We begin with the raw amino-acid sequence, 208 residues long: Ras-related protein Rab-6A (208 aa).

S2 is modified (N-acetylserine). GTP is bound by residues S23, V24, G25, K26, T27, S28, D39, N40, Y42, and T45. Position 27 (T27) interacts with Mg(2+). Residues 32–50 (RFMYDSFDNTYQATIGIDF) carry the Switch 1 motif. The Mg(2+) site is built by T45 and D68. Positions 69 to 88 (TAGQERFRSLIPSYIRDSTV) match the Switch 2 motif. A GTP-binding site is contributed by G71. Y82 carries the post-translational modification O-AMP-tyrosine; by Legionella DrrA. The GTP site is built by N126, K127, D129, S156, A157, and K158. A Phosphoserine modification is found at S184. 2 S-geranylgeranyl cysteine lipidation sites follow: C206 and C208. Position 208 is a cysteine methyl ester (C208).

It belongs to the small GTPase superfamily. Rab family. As to quaternary structure, interacts (GTP-bound) with DYNLRB1; the interaction is direct. Interacts with BICD1. Interacts with BICD2; the interaction is direct. Interacts (GTP-bound) with VPS13B. In terms of assembly, interacts with BICD1. Interacts (GDP-bound) with DYNLRB1; the interaction is direct. Interacts (GTP-bound) with VPS13B. Interacts with BICDL1; leads to its accumulation in the pericentrosomal region. Interacts with SCYL1BP1. Interacts with VSP52. Interacts with RABGAP1. Interacts with GCC2 (via its GRIP domain). Interacts with RAB6IP1 (via its RUN 1 domain). Interacts with TMF1. Interacts with CIMAP3. Interacts (GTP-bound) with APBA1/MINT1 isoform 2, also called Mint1_826, but not with isoform 1. Interacts with RIC1; the interaction is direct with a preference for RAB6A-GDP. Interacts with RGP1; the interaction is direct with a preference for RAB6A-GDP. As to quaternary structure, (Microbial infection) Interacts with human cytomegalovirus protein UL32. Requires Mg(2+) as cofactor. In terms of processing, prenylated. As to expression, ubiquitous.

Its subcellular location is the golgi apparatus membrane. It is found in the cytoplasmic vesicle. It localises to the secretory vesicle. The protein resides in the acrosome membrane. The enzyme catalyses GTP + H2O = GDP + phosphate + H(+). Its activity is regulated as follows. Regulated by guanine nucleotide exchange factors (GEFs) which promote the exchange of bound GDP for free GTP. Regulated by GTPase activating proteins (GAPs) which increase the GTP hydrolysis activity. Inhibited by GDP dissociation inhibitors (GDIs). Its function is as follows. The small GTPases Rab are key regulators of intracellular membrane trafficking, from the formation of transport vesicles to their fusion with membranes. Rabs cycle between an inactive GDP-bound form and an active GTP-bound form that is able to recruit to membranes different sets of downstream effectors directly responsible for vesicle formation, movement, tethering and fusion. RAB6A acts as a regulator of COPI-independent retrograde transport from the Golgi apparatus towards the endoplasmic reticulum (ER). Has a low GTPase activity. Recruits VPS13B to the Golgi membrane. Plays a role in neuron projection development. The sequence is that of Ras-related protein Rab-6A from Homo sapiens (Human).